Reading from the N-terminus, the 67-residue chain is DNA gyrase inhibitor YacG (67 aa).

Residues C9, C12, C28, and C32 each contribute to the Zn(2+) site. A disordered region spans residues 48-67; it reads PVSPDAEDELFSEELPPRAH.

This sequence belongs to the DNA gyrase inhibitor YacG family. In terms of assembly, interacts with GyrB. The cofactor is Zn(2+).

Inhibits all the catalytic activities of DNA gyrase by preventing its interaction with DNA. Acts by binding directly to the C-terminal domain of GyrB, which probably disrupts DNA binding by the gyrase. This chain is DNA gyrase inhibitor YacG, found in Pseudomonas fluorescens (strain ATCC BAA-477 / NRRL B-23932 / Pf-5).